A 462-amino-acid chain; its full sequence is ESX-1 secretion system protein EccE1 (462 aa).

2 consecutive transmembrane segments (helical) span residues 9-29 and 34-54; these read FSTG…IAFL and WWAG…TFYG.

Belongs to the EccE family. As to quaternary structure, part of the ESX-1 / type VII secretion system (T7SS), which is composed of cytosolic and membrane components. The ESX-1 membrane complex is composed of EccB1, EccCa1, EccCb1, EccD1 and EccE1.

Its subcellular location is the cell inner membrane. In terms of biological role, part of the ESX-1 specialized secretion system, which delivers several virulence factors to host cells during infection, including the key virulence factors EsxA (ESAT-6) and EsxB (CFP-10). The polypeptide is ESX-1 secretion system protein EccE1 (Mycobacterium tuberculosis (strain CDC 1551 / Oshkosh)).